The primary structure comprises 459 residues: MSSGRIVQIIGAVIDVEFPRDSVPSIYNALEVQSAAGTTLEVQQQLGDGVVRTIAMGSTEGLKRGLEVTDSGAAISVPVGKATLGRIMDVLGNPIDEAGPIATEERWGIHRPAPSFAEQAGGNDLLETGIKVIDLVCPFAKGGKVGLFGGAGVGKTVNMMELIRNIAIEHSGYSVFAGVGERTREGNDFYHEMKDSNVLDKVALVYGQMNEPPGNRLRVALTGLTMAEKFRDEGNDVLLFVDNIYRYTLAGTEVSALLGRMPSAVGYQPTLAEEMGTLQERITSTKNGSITSIQAVYVPADDLTDPSPATTFAHLDATVVLSRDIASLGIYPAVDPLDSTSRQLDPNVIGQEHYDTARGVQYVLQRYKELKDIIAILGMDELSETDKQLVNRARKIQRFLSQPFFVAEVFTGASGKYVSLKDTIAGFKGILNGDYDHLPEQAFYMVGGIEEAIEKAKKL.

149 to 156 (GGAGVGKT) provides a ligand contact to ATP.

Belongs to the ATPase alpha/beta chains family. In terms of assembly, F-type ATPases have 2 components, CF(1) - the catalytic core - and CF(0) - the membrane proton channel. CF(1) has five subunits: alpha(3), beta(3), gamma(1), delta(1), epsilon(1). CF(0) has three main subunits: a(1), b(2) and c(9-12). The alpha and beta chains form an alternating ring which encloses part of the gamma chain. CF(1) is attached to CF(0) by a central stalk formed by the gamma and epsilon chains, while a peripheral stalk is formed by the delta and b chains.

It localises to the cell inner membrane. It carries out the reaction ATP + H2O + 4 H(+)(in) = ADP + phosphate + 5 H(+)(out). Its function is as follows. Produces ATP from ADP in the presence of a proton gradient across the membrane. The catalytic sites are hosted primarily by the beta subunits. This is ATP synthase subunit beta from Pseudomonas syringae pv. syringae (strain B728a).